The sequence spans 286 residues: Meteorin-like protein (286 aa).

A signal peptide spans 1–20 (MLRRGLLSFFMVILIDRGTS). 5 cysteine pairs are disulfide-bonded: cysteine 28-cysteine 51, cysteine 84-cysteine 120, cysteine 165-cysteine 235, cysteine 168-cysteine 259, and cysteine 178-cysteine 281. N-linked (GlcNAc...) asparagine glycosylation is present at asparagine 203.

It belongs to the meteorin family.

It is found in the secreted. In terms of biological role, hormone induced following exercise or cold exposure that promotes energy expenditure. Induced either in the skeletal muscle after exercise or in adipose tissue following cold exposure and is present in the circulation. Able to stimulate energy expenditure associated with the browning of the white fat depots and improves glucose tolerance. This Xenopus laevis (African clawed frog) protein is Meteorin-like protein (metrnl).